Consider the following 151-residue polypeptide: Probable cGMP 3',5'-cyclic phosphodiesterase subunit delta (151 aa).

Belongs to the PDE6D/unc-119 family. In terms of assembly, interacts with Pde6.

It is found in the nucleus. It localises to the cytoplasm. The polypeptide is Probable cGMP 3',5'-cyclic phosphodiesterase subunit delta (Aedes aegypti (Yellowfever mosquito)).